The chain runs to 202 residues: Small ribosomal subunit protein uS4c (202 aa).

The interval 20-43 (GLTRKTTRRNSRPGQHGDQPRKPS) is disordered. Residues 90 to 152 (MRLDNIVFRL…ARSKQLVENY (63 aa)) form the S4 RNA-binding domain.

Belongs to the universal ribosomal protein uS4 family. In terms of assembly, part of the 30S ribosomal subunit. Contacts protein S5. The interaction surface between S4 and S5 is involved in control of translational fidelity.

The protein resides in the plastid. Its subcellular location is the chloroplast. One of the primary rRNA binding proteins, it binds directly to 16S rRNA where it nucleates assembly of the body of the 30S subunit. In terms of biological role, with S5 and S12 plays an important role in translational accuracy. The polypeptide is Small ribosomal subunit protein uS4c (rps4) (Rhodomonas salina (Cryptomonas salina)).